The sequence spans 363 residues: UDP-N-acetylglucosamine--N-acetylmuramyl-(pentapeptide) pyrophosphoryl-undecaprenol N-acetylglucosamine transferase (363 aa).

Residues 10 to 12, Asn124, Ser195, Ile250, and Gln295 contribute to the UDP-N-acetyl-alpha-D-glucosamine site; that span reads TGG.

Belongs to the glycosyltransferase 28 family. MurG subfamily.

It localises to the cell membrane. It catalyses the reaction di-trans,octa-cis-undecaprenyl diphospho-N-acetyl-alpha-D-muramoyl-L-alanyl-D-glutamyl-meso-2,6-diaminopimeloyl-D-alanyl-D-alanine + UDP-N-acetyl-alpha-D-glucosamine = di-trans,octa-cis-undecaprenyl diphospho-[N-acetyl-alpha-D-glucosaminyl-(1-&gt;4)]-N-acetyl-alpha-D-muramoyl-L-alanyl-D-glutamyl-meso-2,6-diaminopimeloyl-D-alanyl-D-alanine + UDP + H(+). Its pathway is cell wall biogenesis; peptidoglycan biosynthesis. Its function is as follows. Cell wall formation. Catalyzes the transfer of a GlcNAc subunit on undecaprenyl-pyrophosphoryl-MurNAc-pentapeptide (lipid intermediate I) to form undecaprenyl-pyrophosphoryl-MurNAc-(pentapeptide)GlcNAc (lipid intermediate II). The chain is UDP-N-acetylglucosamine--N-acetylmuramyl-(pentapeptide) pyrophosphoryl-undecaprenol N-acetylglucosamine transferase from Listeria monocytogenes serovar 1/2a (strain ATCC BAA-679 / EGD-e).